The following is a 212-amino-acid chain: Imidazole glycerol phosphate synthase subunit HisH (212 aa).

The Glutamine amidotransferase type-1 domain maps to 4–210 (NIGIIDYGMG…LKWLHEKNSD (207 aa)). Cys-82 functions as the Nucleophile in the catalytic mechanism. Active-site residues include His-185 and Glu-187.

Heterodimer of HisH and HisF.

The protein localises to the cytoplasm. It carries out the reaction 5-[(5-phospho-1-deoxy-D-ribulos-1-ylimino)methylamino]-1-(5-phospho-beta-D-ribosyl)imidazole-4-carboxamide + L-glutamine = D-erythro-1-(imidazol-4-yl)glycerol 3-phosphate + 5-amino-1-(5-phospho-beta-D-ribosyl)imidazole-4-carboxamide + L-glutamate + H(+). The enzyme catalyses L-glutamine + H2O = L-glutamate + NH4(+). The protein operates within amino-acid biosynthesis; L-histidine biosynthesis; L-histidine from 5-phospho-alpha-D-ribose 1-diphosphate: step 5/9. Functionally, IGPS catalyzes the conversion of PRFAR and glutamine to IGP, AICAR and glutamate. The HisH subunit catalyzes the hydrolysis of glutamine to glutamate and ammonia as part of the synthesis of IGP and AICAR. The resulting ammonia molecule is channeled to the active site of HisF. This chain is Imidazole glycerol phosphate synthase subunit HisH, found in Prochlorococcus marinus (strain MIT 9211).